The chain runs to 231 residues: 7-cyano-7-deazaguanine synthase (231 aa).

Residue 8–18 participates in ATP binding; it reads FSGGQDSTTCL. The Zn(2+) site is built by Cys188, Cys197, Cys200, and Cys203.

This sequence belongs to the QueC family. Requires Zn(2+) as cofactor.

It carries out the reaction 7-carboxy-7-deazaguanine + NH4(+) + ATP = 7-cyano-7-deazaguanine + ADP + phosphate + H2O + H(+). Its pathway is purine metabolism; 7-cyano-7-deazaguanine biosynthesis. Catalyzes the ATP-dependent conversion of 7-carboxy-7-deazaguanine (CDG) to 7-cyano-7-deazaguanine (preQ(0)). The protein is 7-cyano-7-deazaguanine synthase of Shigella dysenteriae serotype 1 (strain Sd197).